We begin with the raw amino-acid sequence, 98 residues long: NADH-ubiquinone oxidoreductase chain 4L (98 aa).

3 helical membrane passes run proline 2–phenylalanine 22, serine 29–leucine 49, and isoleucine 61–valine 81.

The protein belongs to the complex I subunit 4L family. As to quaternary structure, core subunit of respiratory chain NADH dehydrogenase (Complex I) which is composed of 45 different subunits.

It is found in the mitochondrion inner membrane. It catalyses the reaction a ubiquinone + NADH + 5 H(+)(in) = a ubiquinol + NAD(+) + 4 H(+)(out). Functionally, core subunit of the mitochondrial membrane respiratory chain NADH dehydrogenase (Complex I) which catalyzes electron transfer from NADH through the respiratory chain, using ubiquinone as an electron acceptor. Part of the enzyme membrane arm which is embedded in the lipid bilayer and involved in proton translocation. The polypeptide is NADH-ubiquinone oxidoreductase chain 4L (MT-ND4L) (Avahi unicolor (Sambirano woolly lemur)).